A 302-amino-acid polypeptide reads, in one-letter code: Putative receptor-like protein 16 (302 aa).

LRR repeat units lie at residues Met-1–Met-19, Glu-20–Gly-43, and Asp-45–Ser-70. Residues Leu-72–Ser-91 form an LRR 4; degenerate repeat. LRR repeat units lie at residues Leu-92–Gln-115, Leu-116–Met-140, Ser-142–Tyr-164, Ala-166–Lys-188, Ile-190–Gln-211, Ile-213–Val-234, and Arg-235–Ala-258.

It belongs to the RLP family.

In Arabidopsis thaliana (Mouse-ear cress), this protein is Putative receptor-like protein 16.